A 486-amino-acid chain; its full sequence is MTIKHTQDLAQIRAMVPEMRRVKAIHFIGIGGAGMSGIAEVLLNEGYQISGSDLAANAVTDRLADKGATIFIGHEAHNVAHASVVVVSTAINEQNPEIQAAREKRIPIVRRAEMLAELMRFRHGIAVAGTHGKTTTTALVTQIYSEAGLDPTFVNGGLVKSAGTNARLGSSRILIAEADESDASFLHLQPMVTIVTNIEADHMDTYGGDFENLKQTFIDFLHNLPFYGQAILCIDDPVIRELIPRVSRQVITYGFSEDADVRIENYRQNGQQGQFTVVRKGKANLDITLNIPGRHNALNAAAAIAVATEDDIRDEAILRAMANTQGTGRRFDHLGEFETGNGVAMLVDDYGHHPTEVDVTIKAARNGWAEKRLVMIFQPHRYTRTRDLYDDFANVLEQVDVLIMLDVYAAGEKPIAGADGRSLCRTIRSRGKIDPIFVPDSQTLPSVLANILQDGDLVLTQGAGDVGKVARHLAALELNIGRMQQI.

129–135 (GTHGKTT) is a binding site for ATP.

Belongs to the MurCDEF family.

It is found in the cytoplasm. The catalysed reaction is UDP-N-acetyl-alpha-D-muramate + L-alanine + ATP = UDP-N-acetyl-alpha-D-muramoyl-L-alanine + ADP + phosphate + H(+). Its pathway is cell wall biogenesis; peptidoglycan biosynthesis. Cell wall formation. This Vibrio cholerae serotype O1 (strain ATCC 39315 / El Tor Inaba N16961) protein is UDP-N-acetylmuramate--L-alanine ligase.